A 395-amino-acid chain; its full sequence is Elongation factor Tu (395 aa).

In terms of domain architecture, tr-type G spans 10-204 (KSHVNVGTLG…AVDEYIPTPE (195 aa)). Residues 19–26 (GHVDHGKT) are G1. Residue 19–26 (GHVDHGKT) participates in GTP binding. T26 provides a ligand contact to Mg(2+). Residues 60-64 (GITIS) are G2. The tract at residues 81-84 (DCPG) is G3. GTP is bound by residues 81-85 (DCPGH) and 136-139 (NKTD). The segment at 136-139 (NKTD) is G4. Residues 174–176 (SAL) form a G5 region.

Belongs to the TRAFAC class translation factor GTPase superfamily. Classic translation factor GTPase family. EF-Tu/EF-1A subfamily. As to quaternary structure, monomer.

The protein resides in the cytoplasm. The enzyme catalyses GTP + H2O = GDP + phosphate + H(+). GTP hydrolase that promotes the GTP-dependent binding of aminoacyl-tRNA to the A-site of ribosomes during protein biosynthesis. This chain is Elongation factor Tu, found in Oceanobacillus iheyensis (strain DSM 14371 / CIP 107618 / JCM 11309 / KCTC 3954 / HTE831).